The primary structure comprises 166 residues: Large ribosomal subunit protein uL10 (166 aa).

It belongs to the universal ribosomal protein uL10 family. In terms of assembly, part of the ribosomal stalk of the 50S ribosomal subunit. The N-terminus interacts with L11 and the large rRNA to form the base of the stalk. The C-terminus forms an elongated spine to which L12 dimers bind in a sequential fashion forming a multimeric L10(L12)X complex.

Functionally, forms part of the ribosomal stalk, playing a central role in the interaction of the ribosome with GTP-bound translation factors. This is Large ribosomal subunit protein uL10 from Tropheryma whipplei (strain TW08/27) (Whipple's bacillus).